Consider the following 447-residue polypeptide: 26S proteasome non-ATPase regulatory subunit 12 (447 aa).

Residues 1 to 23 form a disordered region; the sequence is MTIGLEPAVSSKTKDKMEQDLSP. The PCI domain occupies 240–411; it reads NYIEIARCYL…GIATFTTTND (172 aa).

Belongs to the proteasome subunit p55 family.

Its function is as follows. Acts as a regulatory subunit of the 26S proteasome which is involved in the ATP-dependent degradation of ubiquitinated proteins. In Dictyostelium discoideum (Social amoeba), this protein is 26S proteasome non-ATPase regulatory subunit 12 (psmD12).